Consider the following 703-residue polypeptide: Calpain-8 (703 aa).

One can recognise a Calpain catalytic domain in the interval 45–344; it reads LFKDPEFPAC…FSRLEICNLS (300 aa). Catalysis depends on residues C105, H262, and N286. The segment at 356–379 is domain III; sequence WNLVLFNGHWTRGSTAGGCQNYPA. 3 consecutive EF-hand domains span residues 575-610, 618-640, and 670-703; these read FNIN…IQKY, DYNH…AGFT, and IRLE…CVLV. Ca(2+) contacts are provided by D588, N590, T592, T594, E599, D618, N620, S622, T624, and E629.

The protein belongs to the peptidase C2 family. In terms of assembly, monomer and homooligomer. Interacts with COPS1/GPS1, COPB1, EYA2, NME2, NME4 and TOMM70. It depends on Ca(2+) as a cofactor. Post-translationally, undergoes autolytic cleavage between Ala-5 and Ala-6 which gives rise to fragments extending from Ala-6 to the C-terminus, Ala-6 to the EF-hand 2 domain and from Ala-6 to the beginning of domain III. Stomach.

It is found in the cytoplasm. The protein localises to the golgi apparatus. The catalysed reaction is Broad endopeptidase specificity.. In terms of biological role, calcium-regulated non-lysosomal thiol-protease. Involved in membrane trafficking in the gastric surface mucus cells (pit cells) and may involve the membrane trafficking of mucus cells via interactions with coat protein. Proteolytically cleaves the beta-subunit of coatomer complex. The sequence is that of Calpain-8 (CAPN8) from Homo sapiens (Human).